We begin with the raw amino-acid sequence, 159 residues long: 6,7-dimethyl-8-ribityllumazine synthase (159 aa).

5-amino-6-(D-ribitylamino)uracil is bound by residues Trp-28, 59-61 (ALE), and 81-83 (CVI). Residue 86–87 (GT) coordinates (2S)-2-hydroxy-3-oxobutyl phosphate. The active-site Proton donor is His-89. Asn-114 lines the 5-amino-6-(D-ribitylamino)uracil pocket. Residue Arg-128 participates in (2S)-2-hydroxy-3-oxobutyl phosphate binding.

It belongs to the DMRL synthase family.

The enzyme catalyses (2S)-2-hydroxy-3-oxobutyl phosphate + 5-amino-6-(D-ribitylamino)uracil = 6,7-dimethyl-8-(1-D-ribityl)lumazine + phosphate + 2 H2O + H(+). It functions in the pathway cofactor biosynthesis; riboflavin biosynthesis; riboflavin from 2-hydroxy-3-oxobutyl phosphate and 5-amino-6-(D-ribitylamino)uracil: step 1/2. Catalyzes the formation of 6,7-dimethyl-8-ribityllumazine by condensation of 5-amino-6-(D-ribitylamino)uracil with 3,4-dihydroxy-2-butanone 4-phosphate. This is the penultimate step in the biosynthesis of riboflavin. This chain is 6,7-dimethyl-8-ribityllumazine synthase, found in Corynebacterium kroppenstedtii (strain DSM 44385 / JCM 11950 / CIP 105744 / CCUG 35717).